A 146-amino-acid chain; its full sequence is Large ribosomal subunit protein uL15 (146 aa).

A compositionally biased stretch (basic and acidic residues) spans methionine 1–arginine 13. The segment at methionine 1 to glycine 65 is disordered. Gly residues-rich tracts occupy residues arginine 21–alanine 31 and serine 42–glycine 52.

This sequence belongs to the universal ribosomal protein uL15 family. In terms of assembly, part of the 50S ribosomal subunit.

Functionally, binds to the 23S rRNA. The chain is Large ribosomal subunit protein uL15 from Halalkalibacterium halodurans (strain ATCC BAA-125 / DSM 18197 / FERM 7344 / JCM 9153 / C-125) (Bacillus halodurans).